Reading from the N-terminus, the 213-residue chain is MPEQYQESMTGTTTVGLVFAGGVILATEKRATMGYMIASKRAKKVYQIADRIGMTIAGGVGDAQQLARIITVECNLYQIRRSREITVGAASTLLSNYLNQNRYFPYYVQLLVGGIDDHGPSVYSVDAMGGATKEEDIVSTGSGSPMAYGVLEDRYRPGMNEDEAVELAVRALRSAMKRDAGSGEGIHVVVITKDRYENVSEETIKKHLAKTIA.

Residues 1-11 (MPEQYQESMTG) constitute a propeptide, removed in mature form; by autocatalysis. The active-site Nucleophile is Thr-12.

This sequence belongs to the peptidase T1B family. In terms of assembly, the 20S proteasome core is composed of 14 alpha and 14 beta subunits that assemble into four stacked heptameric rings, resulting in a barrel-shaped structure. The two inner rings, each composed of seven catalytic beta subunits, are sandwiched by two outer rings, each composed of seven alpha subunits. The catalytic chamber with the active sites is on the inside of the barrel. Has a gated structure, the ends of the cylinder being occluded by the N-termini of the alpha-subunits. Is capped at one or both ends by the proteasome regulatory ATPase, PAN.

The protein localises to the cytoplasm. It catalyses the reaction Cleavage of peptide bonds with very broad specificity.. The formation of the proteasomal ATPase PAN-20S proteasome complex, via the docking of the C-termini of PAN into the intersubunit pockets in the alpha-rings, triggers opening of the gate for substrate entry. Interconversion between the open-gate and close-gate conformations leads to a dynamic regulation of the 20S proteasome proteolysis activity. Its function is as follows. Component of the proteasome core, a large protease complex with broad specificity involved in protein degradation. This is Proteasome subunit beta from Methanoregula boonei (strain DSM 21154 / JCM 14090 / 6A8).